The sequence spans 428 residues: 3-phosphoshikimate 1-carboxyvinyltransferase (428 aa).

3 residues coordinate 3-phosphoshikimate: Lys20, Ser21, and Arg25. Lys20 is a phosphoenolpyruvate binding site. Phosphoenolpyruvate contacts are provided by Gly92 and Arg120. 3-phosphoshikimate-binding residues include Ser166, Gln168, Asp314, and Lys341. Phosphoenolpyruvate is bound at residue Gln168. Catalysis depends on Asp314, which acts as the Proton acceptor. Phosphoenolpyruvate-binding residues include Arg345 and Arg387.

It belongs to the EPSP synthase family. As to quaternary structure, monomer.

The protein resides in the cytoplasm. It catalyses the reaction 3-phosphoshikimate + phosphoenolpyruvate = 5-O-(1-carboxyvinyl)-3-phosphoshikimate + phosphate. It functions in the pathway metabolic intermediate biosynthesis; chorismate biosynthesis; chorismate from D-erythrose 4-phosphate and phosphoenolpyruvate: step 6/7. Its function is as follows. Catalyzes the transfer of the enolpyruvyl moiety of phosphoenolpyruvate (PEP) to the 5-hydroxyl of shikimate-3-phosphate (S3P) to produce enolpyruvyl shikimate-3-phosphate and inorganic phosphate. The sequence is that of 3-phosphoshikimate 1-carboxyvinyltransferase from Listeria innocua serovar 6a (strain ATCC BAA-680 / CLIP 11262).